A 313-amino-acid chain; its full sequence is D-beta-D-heptose 7-phosphate kinase (313 aa).

N196 to E199 contacts ATP. D264 is a catalytic residue.

It carries out the reaction D-glycero-beta-D-manno-heptose 7-phosphate + ATP = D-glycero-beta-D-manno-heptose 1,7-bisphosphate + ADP + H(+). It functions in the pathway nucleotide-sugar biosynthesis; ADP-L-glycero-beta-D-manno-heptose biosynthesis; ADP-L-glycero-beta-D-manno-heptose from D-glycero-beta-D-manno-heptose 7-phosphate: step 1/4. It participates in bacterial outer membrane biogenesis; LPS core biosynthesis. Catalyzes the phosphorylation of D-glycero-D-manno-heptose 7-phosphate at the C-1 position to selectively form D-glycero-beta-D-manno-heptose-1,7-bisphosphate. This chain is D-beta-D-heptose 7-phosphate kinase (rfaE), found in Bordetella bronchiseptica (strain ATCC BAA-588 / NCTC 13252 / RB50) (Alcaligenes bronchisepticus).